Here is a 748-residue protein sequence, read N- to C-terminus: Antigen peptide transporter 1 (748 aa).

Residues 1-15 (MASSRCPAPRGCRCL) lie on the Cytoplasmic side of the membrane. The helical transmembrane segment at 16-36 (PGASLAWLGTVLLFLADWVLL) threads the bilayer. The Lumenal portion of the chain corresponds to 37 to 53 (RTALPRIFSLLVPTALP). Residues 54–76 (LLRVWAVGLSRWAVLWLGACGVL) form a helical membrane-spanning segment. The Cytoplasmic portion of the chain corresponds to 77–92 (RATVGSKSENAGAQGW). A helical transmembrane segment spans residues 93 to 113 (LAALEPLAAALGLALPGLALF). At 114–133 (RELISWGAPGSADSTRLLHW) the chain is on the lumenal side. The chain crosses the membrane as a helical span at residues 134–154 (GSHPSAFVVSYAAALPAAALW). Residues 155–186 (HKLGSLWVPGGQGGSGNPVRRLLGCLGSETRR) are Cytoplasmic-facing. A helical transmembrane segment spans residues 187-207 (LSLFLVLVVLSSLGEMAIPFF). One can recognise an ABC transmembrane type-1 domain in the interval 187-470 (LSLFLVLVVL…LLSIYPRVQK (284 aa)). At 208-227 (TGRLTDWILQDGSADTFTRN) the chain is on the lumenal side. Residues 228–248 (LTLMSILTIASAVLEFVGDGI) traverse the membrane as a helical segment. Over 249–298 (YNNTMGHVHSHLQGEVFGAVLRQETEFFQQNQTGNITSRVTEDTSTLSDS) the chain is Cytoplasmic. A helical transmembrane segment spans residues 299-319 (LSENLSLFLWYLVRGLCLLGI). Over 320 to 328 (MLWGSVSLT) the chain is Lumenal. The helical transmembrane segment at 329–349 (MVTLVTLPLLFLLPKKVGKWY) threads the bilayer. Topologically, residues 350 to 418 (QLLEVQVRES…AVNSWTTSIS (69 aa)) are cytoplasmic. The tract at residues 375–420 (PTVRSFANEEGEAQKFREKLQEIKTLNQKEAVAYAVNSWTTSISGM) is part of the peptide-binding site. The chain crosses the membrane as a helical span at residues 419-439 (GMLLKVGILYIGGQLVTSGAV). Residues 440–443 (SSGN) lie on the Lumenal side of the membrane. Residues 444 to 464 (LVTFVLYQMQFTQAVEVLLSI) form a helical membrane-spanning segment. Residues 453–487 (QFTQAVEVLLSIYPRVQKAVGSSEKIFEYLDRTPR) are part of the peptide-binding site. At 465-748 (YPRVQKAVGS…MVQAPADAPE (284 aa)) the chain is on the cytoplasmic side. Positions 503-742 (VQFQDVSFAY…KGCYWAMVQA (240 aa)) constitute an ABC transporter domain. ATP contacts are provided by residues 538–546 (GPNGSGKST), 641–647 (SQLSGGQ), and glutamine 701. Residue serine 545 participates in Mg(2+) binding.

Belongs to the ABC transporter superfamily. ABCB family. MHC peptide exporter (TC 3.A.1.209) subfamily. As to quaternary structure, heterodimer of TAP1 and TAP2 (TAP1-TAP2). A component of the peptide loading complex (PLC), interacts via TAPBP with MHCI heterodimer; this interaction mediates peptide-MHCI assembly. Interacts with PSMB5 and PSMB8. Mg(2+) is required as a cofactor.

The protein localises to the endoplasmic reticulum membrane. It carries out the reaction a peptide antigen(in) + ATP + H2O = a peptide antigen(out) + ADP + phosphate + H(+). Functionally, ABC transporter associated with antigen processing. In complex with TAP2 mediates unidirectional translocation of peptide antigens from cytosol to endoplasmic reticulum (ER) for loading onto MHC class I (MHCI) molecules. Uses the chemical energy of ATP to export peptides against the concentration gradient. During the transport cycle alternates between 'inward-facing' state with peptide binding site facing the cytosol to 'outward-facing' state with peptide binding site facing the ER lumen. Peptide antigen binding to ATP-loaded TAP1-TAP2 induces a switch to hydrolysis-competent 'outward-facing' conformation ready for peptide loading onto nascent MHCI molecules. Subsequently ATP hydrolysis resets the transporter to the 'inward facing' state for a new cycle. As a component of the peptide loading complex (PLC), acts as a molecular scaffold essential for peptide-MHCI assembly and antigen presentation. The polypeptide is Antigen peptide transporter 1 (TAP1) (Gorilla gorilla gorilla (Western lowland gorilla)).